A 263-amino-acid polypeptide reads, in one-letter code: Histidine racemase (263 aa).

Cys67 (proton acceptor) is an active-site residue. Cys209 acts as the Proton donor in catalysis.

Belongs to the histidine racemase family. As to quaternary structure, homodimer.

It catalyses the reaction L-histidine = D-histidine. Cofactor-independent isomerase that catalyzes the reversible conversion of L-histidine to D-histidine. May play a role in growth of F.nucleatum. This Fusobacterium nucleatum subsp. nucleatum (strain ATCC 23726 / VPI 4351) protein is Histidine racemase.